The sequence spans 137 residues: Small ribosomal subunit protein uS12 (137 aa).

The disordered stretch occupies residues 1–28; that stretch reads MPTINQLVRKPRKSKAKKSDSPALNKGF. The residue at position 102 (Asp102) is a 3-methylthioaspartic acid.

Belongs to the universal ribosomal protein uS12 family. As to quaternary structure, part of the 30S ribosomal subunit. Contacts proteins S8 and S17. May interact with IF1 in the 30S initiation complex.

With S4 and S5 plays an important role in translational accuracy. Its function is as follows. Interacts with and stabilizes bases of the 16S rRNA that are involved in tRNA selection in the A site and with the mRNA backbone. Located at the interface of the 30S and 50S subunits, it traverses the body of the 30S subunit contacting proteins on the other side and probably holding the rRNA structure together. The combined cluster of proteins S8, S12 and S17 appears to hold together the shoulder and platform of the 30S subunit. This chain is Small ribosomal subunit protein uS12, found in Staphylococcus carnosus (strain TM300).